Here is a 517-residue protein sequence, read N- to C-terminus: Beta-galactoside alpha-2,6-sialyltransferase 2 (517 aa).

Over 1–10 (MKPNLKQWKQ) the chain is Cytoplasmic. Residues 11–31 (FMLFGICAWGLLFLVIFVYFT) form a helical; Signal-anchor for type II membrane protein membrane-spanning segment. The Lumenal segment spans residues 32-517 (DSNSVEPVPS…IHCPIKDHIT (486 aa)). N-linked (GlcNAc...) asparagine glycosylation is found at Asn-201, Asn-298, and Asn-328. Cystine bridges form between Cys-244-Cys-510, Cys-287-Cys-439, and Cys-457-Cys-468.

The protein belongs to the glycosyltransferase 29 family.

The protein localises to the golgi apparatus. It is found in the golgi stack membrane. It carries out the reaction a beta-D-galactoside + CMP-N-acetyl-beta-neuraminate = an N-acetyl-alpha-neuraminyl-(2-&gt;6)-beta-D-galactosyl derivative + CMP + H(+). Transfers sialic acid from the donor of substrate CMP-sialic acid to galactose containing acceptor substrates. The sequence is that of Beta-galactoside alpha-2,6-sialyltransferase 2 (st6gal2) from Xenopus tropicalis (Western clawed frog).